The primary structure comprises 341 residues: Lipoyl synthase (341 aa).

[4Fe-4S] cluster is bound by residues Cys85, Cys90, Cys96, Cys111, Cys115, Cys118, and Ser325. The region spanning 97–314 (FSGGTATFMI…AEEGYKMGFK (218 aa)) is the Radical SAM core domain.

Belongs to the radical SAM superfamily. Lipoyl synthase family. The cofactor is [4Fe-4S] cluster.

The protein resides in the cytoplasm. It carries out the reaction [[Fe-S] cluster scaffold protein carrying a second [4Fe-4S](2+) cluster] + N(6)-octanoyl-L-lysyl-[protein] + 2 oxidized [2Fe-2S]-[ferredoxin] + 2 S-adenosyl-L-methionine + 4 H(+) = [[Fe-S] cluster scaffold protein] + N(6)-[(R)-dihydrolipoyl]-L-lysyl-[protein] + 4 Fe(3+) + 2 hydrogen sulfide + 2 5'-deoxyadenosine + 2 L-methionine + 2 reduced [2Fe-2S]-[ferredoxin]. The protein operates within protein modification; protein lipoylation via endogenous pathway; protein N(6)-(lipoyl)lysine from octanoyl-[acyl-carrier-protein]: step 2/2. In terms of biological role, catalyzes the radical-mediated insertion of two sulfur atoms into the C-6 and C-8 positions of the octanoyl moiety bound to the lipoyl domains of lipoate-dependent enzymes, thereby converting the octanoylated domains into lipoylated derivatives. This is Lipoyl synthase from Pseudomonas fluorescens (strain SBW25).